The sequence spans 178 residues: ATP synthase subunit delta (178 aa).

This sequence belongs to the ATPase delta chain family. F-type ATPases have 2 components, F(1) - the catalytic core - and F(0) - the membrane proton channel. F(1) has five subunits: alpha(3), beta(3), gamma(1), delta(1), epsilon(1). F(0) has three main subunits: a(1), b(2) and c(10-14). The alpha and beta chains form an alternating ring which encloses part of the gamma chain. F(1) is attached to F(0) by a central stalk formed by the gamma and epsilon chains, while a peripheral stalk is formed by the delta and b chains.

It is found in the cell membrane. Its function is as follows. F(1)F(0) ATP synthase produces ATP from ADP in the presence of a proton or sodium gradient. F-type ATPases consist of two structural domains, F(1) containing the extramembraneous catalytic core and F(0) containing the membrane proton channel, linked together by a central stalk and a peripheral stalk. During catalysis, ATP synthesis in the catalytic domain of F(1) is coupled via a rotary mechanism of the central stalk subunits to proton translocation. Functionally, this protein is part of the stalk that links CF(0) to CF(1). It either transmits conformational changes from CF(0) to CF(1) or is implicated in proton conduction. The sequence is that of ATP synthase subunit delta from Streptococcus sanguinis (strain SK36).